Reading from the N-terminus, the 813-residue chain is Leucine--tRNA ligase (813 aa).

The 'HIGH' region motif lies at 40-51; the sequence is SYPSGSKLHAGH. A 'KMSKS' region motif is present at residues 572 to 576; it reads KMSKS. Lys-575 is a binding site for ATP.

Belongs to the class-I aminoacyl-tRNA synthetase family.

Its subcellular location is the cytoplasm. The enzyme catalyses tRNA(Leu) + L-leucine + ATP = L-leucyl-tRNA(Leu) + AMP + diphosphate. This is Leucine--tRNA ligase from Clostridium botulinum (strain ATCC 19397 / Type A).